Here is a 289-residue protein sequence, read N- to C-terminus: RNA-binding protein CP29B, chloroplastic (289 aa).

The N-terminal 62 residues, 1-62, are a transit peptide targeting the chloroplast; sequence MAASASSLAL…NSPASRFARN (62 aa). Phosphoserine is present on residues S6 and S12. N-acetylvaline is present on V63. An RRM 1 domain is found at 91–169; that stretch reads LKLFVGNLPF…RPLRVNAGPP (79 aa). The segment at 158-199 is disordered; that stretch reads DGRPLRVNAGPPPPKREDGFSRGPRSSFGSSGSGYGGGGGSG. The segment at 170–203 is linker (Gly-rich); it reads PPKREDGFSRGPRSSFGSSGSGYGGGGGSGAGSG. Over residues 178 to 187 the composition is skewed to low complexity; that stretch reads SRGPRSSFGS. Gly residues predominate over residues 188-199; it reads SGSGYGGGGGSG. Residues 204 to 282 form the RRM 2 domain; sequence NRVYVGNLSW…RQIRVSEAEA (79 aa).

Post-translationally, ADP-ribosylated by the Pseudomonas syringae type III effector HopU1. ADP-ribosylation reduces the ability of the protein to bind RNA. Phosphorylated on tyrosine residues after treatment with abscisic acid (ABA). Phosphorylation may reduce the ability of the protein to bind RNA.

The protein localises to the plastid. Its subcellular location is the chloroplast. Could be involved in splicing and/or processing of chloroplast RNA's. This Arabidopsis thaliana (Mouse-ear cress) protein is RNA-binding protein CP29B, chloroplastic.